The chain runs to 300 residues: Enoyl-CoA hydratase domain-containing protein 3, mitochondrial (300 aa).

Residues 1–66 constitute a mitochondrion transit peptide; sequence MALVAGLRAF…RNIVLSNPRR (66 aa). A disordered region spans residues 32-54; that stretch reads SPGSARPAGPESEPRLTSTRQQD. Position 110 is an N6-succinyllysine (K110).

Belongs to the enoyl-CoA hydratase/isomerase family.

The protein localises to the mitochondrion. In terms of biological role, may play a role in fatty acid biosynthesis and insulin sensitivity. The chain is Enoyl-CoA hydratase domain-containing protein 3, mitochondrial from Rattus norvegicus (Rat).